The primary structure comprises 169 residues: Crossover junction endodeoxyribonuclease RuvC (169 aa).

Active-site residues include D15, E75, and D147. Mg(2+)-binding residues include D15, E75, and D147.

Belongs to the RuvC family. Homodimer which binds Holliday junction (HJ) DNA. The HJ becomes 2-fold symmetrical on binding to RuvC with unstacked arms; it has a different conformation from HJ DNA in complex with RuvA. In the full resolvosome a probable DNA-RuvA(4)-RuvB(12)-RuvC(2) complex forms which resolves the HJ. Requires Mg(2+) as cofactor.

The protein localises to the cytoplasm. It catalyses the reaction Endonucleolytic cleavage at a junction such as a reciprocal single-stranded crossover between two homologous DNA duplexes (Holliday junction).. Functionally, the RuvA-RuvB-RuvC complex processes Holliday junction (HJ) DNA during genetic recombination and DNA repair. Endonuclease that resolves HJ intermediates. Cleaves cruciform DNA by making single-stranded nicks across the HJ at symmetrical positions within the homologous arms, yielding a 5'-phosphate and a 3'-hydroxyl group; requires a central core of homology in the junction. The consensus cleavage sequence is 5'-(A/T)TT(C/G)-3'. Cleavage occurs on the 3'-side of the TT dinucleotide at the point of strand exchange. HJ branch migration catalyzed by RuvA-RuvB allows RuvC to scan DNA until it finds its consensus sequence, where it cleaves and resolves the cruciform DNA. This is Crossover junction endodeoxyribonuclease RuvC from Caulobacter sp. (strain K31).